Here is a 192-residue protein sequence, read N- to C-terminus: dTTP/UTP pyrophosphatase (192 aa).

Aspartate 65 (proton acceptor) is an active-site residue.

Belongs to the Maf family. YhdE subfamily. A divalent metal cation serves as cofactor.

It localises to the cytoplasm. The enzyme catalyses dTTP + H2O = dTMP + diphosphate + H(+). It catalyses the reaction UTP + H2O = UMP + diphosphate + H(+). Nucleoside triphosphate pyrophosphatase that hydrolyzes dTTP and UTP. May have a dual role in cell division arrest and in preventing the incorporation of modified nucleotides into cellular nucleic acids. The sequence is that of dTTP/UTP pyrophosphatase from Fusobacterium nucleatum subsp. nucleatum (strain ATCC 25586 / DSM 15643 / BCRC 10681 / CIP 101130 / JCM 8532 / KCTC 2640 / LMG 13131 / VPI 4355).